We begin with the raw amino-acid sequence, 446 residues long: Forkhead box protein F2 (446 aa).

Residues 1–18 (MSTEGGPPPPPPRPPPAP) show a composition bias toward pro residues. The segment at 1 to 97 (MSTEGGPPPP…TKKATSGLRR (97 aa)) is disordered. A compositionally biased stretch (low complexity) spans 45 to 78 (STSSSSSSSSASCASSSSNSVSASAGACKSAASS). The fork-head DNA-binding region spans 100–194 (KPPYSYIALI…EEGSFRRRPR (95 aa)). Disordered regions lie at residues 257-278 (AGAPGHAHPHHLHHHHVPHMSP), 304-325 (GGGGGDYGPDSSSSPVPSSPAM), and 340-371 (AHWSSPGASPYLKQPPALTPSSNPAASAGLHP). Over residues 263-274 (AHPHHLHHHHVP) the composition is skewed to basic residues. The segment covering 311-325 (GPDSSSSPVPSSPAM) has biased composition (low complexity).

Interacts with the transcription factors TBP and TFIIB. Uniquely expressed in the bronchiolar epithelium and in type II pneumocytes.

Its subcellular location is the nucleus. In terms of biological role, probable transcription activator for a number of lung-specific genes. Mediates up-regulation of the E3 ligase IRF2BPL and drives ubiquitination and degradation of CTNNB1. This is Forkhead box protein F2 (Foxf2) from Mus musculus (Mouse).